A 346-amino-acid polypeptide reads, in one-letter code: Hexosaminidase D (346 aa).

Catalysis depends on Glu-141, which acts as the Proton donor.

Belongs to the glycosyl hydrolase 20 family. Homodimer; disulfide-linked.

It is found in the cytoplasm. The protein resides in the nucleus. The protein localises to the extracellular vesicle. It catalyses the reaction Hydrolysis of terminal non-reducing N-acetyl-D-hexosamine residues in N-acetyl-beta-D-hexosaminides.. Inhibited by O-(2-acetamido-2-deoxy-D-glucopyranosylidene)amino N-phenylcarbamate (PUGNAc). Inhibited by galacto-NAG-thiazoline. Its function is as follows. Has hexosaminidase activity. Responsible for the cleavage of the monosaccharides N-acetylglucosamine (GlcNAc) and N-acetylgalactosamine (GalNAc) from cellular substrates. Has a preference for galactosaminide over glucosaminide substrates. In Bos taurus (Bovine), this protein is Hexosaminidase D.